We begin with the raw amino-acid sequence, 264 residues long: MKQYLDLLNRVLTEGTEKSDRTGTGTISVFGHQMRFNLDEGFPCLTTKKLHLKSIIYELLWFLQGDTNAKYLQEHGVRIWNEWADENGDLGHIYGYQWRSWPDYDGGFIDQISEAVETIKHNPDSRRIIVSAWNVADLKNMNLPPCHAFFQFYVADGRLSLQLYQRSADIFLGVPFNIASYALLLQMMAQVTGLKAGEFIHTLGDAHIYLNHLDQVKLQLSREPRALPQMKINPDVKSIYDFQFEDFELVNYDPHPHIAGIVAV.

R21 contributes to the dUMP binding site. H51 provides a ligand contact to (6R)-5,10-methylene-5,6,7,8-tetrahydrofolate. 126-127 is a dUMP binding site; it reads RR. C146 serves as the catalytic Nucleophile. DUMP contacts are provided by residues 166–169, N177, and 207–209; these read RSAD and HIY. D169 is a (6R)-5,10-methylene-5,6,7,8-tetrahydrofolate binding site. A263 contacts (6R)-5,10-methylene-5,6,7,8-tetrahydrofolate.

It belongs to the thymidylate synthase family. Bacterial-type ThyA subfamily. Homodimer.

The protein resides in the cytoplasm. The catalysed reaction is dUMP + (6R)-5,10-methylene-5,6,7,8-tetrahydrofolate = 7,8-dihydrofolate + dTMP. The protein operates within pyrimidine metabolism; dTTP biosynthesis. Functionally, catalyzes the reductive methylation of 2'-deoxyuridine-5'-monophosphate (dUMP) to 2'-deoxythymidine-5'-monophosphate (dTMP) while utilizing 5,10-methylenetetrahydrofolate (mTHF) as the methyl donor and reductant in the reaction, yielding dihydrofolate (DHF) as a by-product. This enzymatic reaction provides an intracellular de novo source of dTMP, an essential precursor for DNA biosynthesis. This is Thymidylate synthase from Bacteroides thetaiotaomicron (strain ATCC 29148 / DSM 2079 / JCM 5827 / CCUG 10774 / NCTC 10582 / VPI-5482 / E50).